Consider the following 210-residue polypeptide: MTLPSGVERHDFGGETSLATQGQPVYGERTDGDWRRWDPHRSKLGAMLAHGMDTGLGGGETVLYLGAAAGTTVSHVADFGGPTYAVEFAPRPVRELLDAAESRRNLFPLLKDARKPESYAHVVEPVDVVVQDVATRGQARVATLNKQFLTDDGRLLAAIKARSEDVTADPDAVFDSVRAELSAEYELLETARLDPYHEDHLGIVARPRKD.

Residues 1–34 form a disordered region; it reads MTLPSGVERHDFGGETSLATQGQPVYGERTDGDW. Residues 71-72, 87-88, 112-113, and 132-135 each bind S-adenosyl-L-methionine; these read TT, EF, DA, and DVAT.

The protein belongs to the methyltransferase superfamily. Fibrillarin family. As to quaternary structure, interacts with nop5. Component of box C/D small ribonucleoprotein (sRNP) particles that contain rpl7ae, FlpA and nop5, plus a guide RNA.

Functionally, involved in pre-rRNA and tRNA processing. Utilizes the methyl donor S-adenosyl-L-methionine to catalyze the site-specific 2'-hydroxyl methylation of ribose moieties in rRNA and tRNA. Site specificity is provided by a guide RNA that base pairs with the substrate. Methylation occurs at a characteristic distance from the sequence involved in base pairing with the guide RNA. This Haloarcula marismortui (strain ATCC 43049 / DSM 3752 / JCM 8966 / VKM B-1809) (Halobacterium marismortui) protein is Fibrillarin-like rRNA/tRNA 2'-O-methyltransferase.